The primary structure comprises 338 residues: Porphobilinogen deaminase (338 aa).

An S-(dipyrrolylmethanemethyl)cysteine modification is found at Cys-265.

Belongs to the HMBS family. It depends on dipyrromethane as a cofactor.

It carries out the reaction 4 porphobilinogen + H2O = hydroxymethylbilane + 4 NH4(+). Its pathway is porphyrin-containing compound metabolism; protoporphyrin-IX biosynthesis; coproporphyrinogen-III from 5-aminolevulinate: step 2/4. In terms of biological role, tetrapolymerization of the monopyrrole PBG into the hydroxymethylbilane pre-uroporphyrinogen in several discrete steps. The protein is Porphobilinogen deaminase (HEM3) of Yarrowia lipolytica (strain CLIB 122 / E 150) (Yeast).